Reading from the N-terminus, the 286-residue chain is NAD kinase (286 aa).

Asp-74 acts as the Proton acceptor in catalysis. NAD(+) contacts are provided by residues 74-75 (DG), 148-149 (ND), Asp-178, Ala-186, 189-194 (TAYNLS), and Gln-244.

The protein belongs to the NAD kinase family. It depends on a divalent metal cation as a cofactor.

The protein resides in the cytoplasm. The catalysed reaction is NAD(+) + ATP = ADP + NADP(+) + H(+). Functionally, involved in the regulation of the intracellular balance of NAD and NADP, and is a key enzyme in the biosynthesis of NADP. Catalyzes specifically the phosphorylation on 2'-hydroxyl of the adenosine moiety of NAD to yield NADP. In Campylobacter jejuni (strain RM1221), this protein is NAD kinase.